Reading from the N-terminus, the 531-residue chain is Probable mitochondrial-processing peptidase subunit beta, mitochondrial (531 aa).

A mitochondrion-targeting transit peptide spans 1 to 78 (MAMKNLLSLA…ENPDKRFLKY (78 aa)). Residues 30-50 (SAIDSVPASASPTALSPPPPH) form a disordered region. His141 contacts Zn(2+). Residue Glu144 is the Proton acceptor of the active site. His145 provides a ligand contact to Zn(2+). Glu214 is an active-site residue. Glu221 lines the Zn(2+) pocket.

Belongs to the peptidase M16 family. Heterodimer of an alpha subunit and a beta subunit subunits, forming the mitochondrial processing protease (MPP) in which the alpha subunit is involved in substrate recognition and binding and the beta subunit is the catalytic subunit. Component of the ubiquinol-cytochrome c oxidoreductase (cytochrome b-c1 complex, complex III, CIII), a multisubunit enzyme composed of 10 subunits. The complex is composed of 3 respiratory subunits cytochrome b (MT-CYB), cytochrome c1 (CYC1-1 or CYC1-2) and Rieske protein (UCR1-1 or UCR1-2), 2 core protein subunits MPPalpha1 (or MPPalpha2) and MPPB, and 5 low-molecular weight protein subunits QCR7-1 (or QCR7-2), UCRQ-1 (or UCRQ-2), QCR9, UCRY and probably QCR6-1 (or QCR6-2). The complex exists as an obligatory dimer and forms supercomplexes (SCs) in the inner mitochondrial membrane with NADH-ubiquinone oxidoreductase (complex I, CI), resulting in different assemblies (supercomplexes SCI(1)III(2) and SCI(2)III(4)). Zn(2+) is required as a cofactor.

The protein localises to the mitochondrion. It is found in the mitochondrion inner membrane. The enzyme catalyses Release of N-terminal transit peptides from precursor proteins imported into the mitochondrion, typically with Arg in position P2.. Its activity is regulated as follows. Binding to the alpha subunit is required for catalytic activity. Functionally, catalytic subunit of the essential mitochondrial processing protease (MPP), which cleaves the mitochondrial sequence off newly imported precursors proteins. Preferentially, cleaves after an arginine at position P2. In terms of biological role, component of the ubiquinol-cytochrome c oxidoreductase, a multisubunit transmembrane complex that is part of the mitochondrial electron transport chain which drives oxidative phosphorylation. The respiratory chain contains 3 multisubunit complexes succinate dehydrogenase (complex II, CII), ubiquinol-cytochrome c oxidoreductase (cytochrome b-c1 complex, complex III, CIII) and cytochrome c oxidase (complex IV, CIV), that cooperate to transfer electrons derived from NADH and succinate to molecular oxygen, creating an electrochemical gradient over the inner membrane that drives transmembrane transport and the ATP synthase. The cytochrome b-c1 complex catalyzes electron transfer from ubiquinol to cytochrome c, linking this redox reaction to translocation of protons across the mitochondrial inner membrane, with protons being carried across the membrane as hydrogens on the quinol. In the process called Q cycle, 2 protons are consumed from the matrix, 4 protons are released into the intermembrane space and 2 electrons are passed to cytochrome c. This chain is Probable mitochondrial-processing peptidase subunit beta, mitochondrial (MPPbeta), found in Arabidopsis thaliana (Mouse-ear cress).